We begin with the raw amino-acid sequence, 337 residues long: Aspartate carbamoyltransferase catalytic subunit (337 aa).

The carbamoyl phosphate site is built by R57 and T58. L-aspartate is bound at residue K86. 3 residues coordinate carbamoyl phosphate: R107, H135, and Q138. Positions 172 and 234 each coordinate L-aspartate. Carbamoyl phosphate is bound by residues L274 and P275.

It belongs to the aspartate/ornithine carbamoyltransferase superfamily. ATCase family. Heterododecamer (2C3:3R2) of six catalytic PyrB chains organized as two trimers (C3), and six regulatory PyrI chains organized as three dimers (R2).

It carries out the reaction carbamoyl phosphate + L-aspartate = N-carbamoyl-L-aspartate + phosphate + H(+). It functions in the pathway pyrimidine metabolism; UMP biosynthesis via de novo pathway; (S)-dihydroorotate from bicarbonate: step 2/3. In terms of biological role, catalyzes the condensation of carbamoyl phosphate and aspartate to form carbamoyl aspartate and inorganic phosphate, the committed step in the de novo pyrimidine nucleotide biosynthesis pathway. This is Aspartate carbamoyltransferase catalytic subunit from Saccharophagus degradans (strain 2-40 / ATCC 43961 / DSM 17024).